Consider the following 433-residue polypeptide: Glutamate-1-semialdehyde 2,1-aminomutase (433 aa).

K272 carries the N6-(pyridoxal phosphate)lysine modification.

It belongs to the class-III pyridoxal-phosphate-dependent aminotransferase family. HemL subfamily. In terms of assembly, homodimer. Pyridoxal 5'-phosphate serves as cofactor.

The protein resides in the cytoplasm. It catalyses the reaction (S)-4-amino-5-oxopentanoate = 5-aminolevulinate. Its pathway is porphyrin-containing compound metabolism; protoporphyrin-IX biosynthesis; 5-aminolevulinate from L-glutamyl-tRNA(Glu): step 2/2. This Magnetococcus marinus (strain ATCC BAA-1437 / JCM 17883 / MC-1) protein is Glutamate-1-semialdehyde 2,1-aminomutase.